We begin with the raw amino-acid sequence, 255 residues long: Vitamin B12 import ATP-binding protein BtuD (255 aa).

The ABC transporter domain occupies 2–240 (MRVKHIAVGS…AGLAEVFKTQ (239 aa)). 30 to 37 (GPNGSGKS) contributes to the ATP binding site.

It belongs to the ABC transporter superfamily. Vitamin B12 importer (TC 3.A.1.13.1) family. In terms of assembly, the complex is composed of two ATP-binding proteins (BtuD), two transmembrane proteins (BtuC) and a solute-binding protein (BtuF).

Its subcellular location is the cell inner membrane. The catalysed reaction is an R-cob(III)alamin(out) + ATP + H2O = an R-cob(III)alamin(in) + ADP + phosphate + H(+). Part of the ABC transporter complex BtuCDF involved in vitamin B12 import. Responsible for energy coupling to the transport system. This is Vitamin B12 import ATP-binding protein BtuD from Vibrio parahaemolyticus serotype O3:K6 (strain RIMD 2210633).